The chain runs to 305 residues: tRNA pseudouridine synthase B (305 aa).

Catalysis depends on aspartate 39, which acts as the Nucleophile.

Belongs to the pseudouridine synthase TruB family. Type 1 subfamily.

The catalysed reaction is uridine(55) in tRNA = pseudouridine(55) in tRNA. Responsible for synthesis of pseudouridine from uracil-55 in the psi GC loop of transfer RNAs. The protein is tRNA pseudouridine synthase B of Staphylococcus aureus (strain MSSA476).